The primary structure comprises 489 residues: Glutamyl-tRNA(Gln) amidotransferase subunit A (489 aa).

Catalysis depends on charge relay system residues lysine 80 and serine 160. Serine 184 (acyl-ester intermediate) is an active-site residue.

This sequence belongs to the amidase family. GatA subfamily. As to quaternary structure, heterotrimer of A, B and C subunits.

The enzyme catalyses L-glutamyl-tRNA(Gln) + L-glutamine + ATP + H2O = L-glutaminyl-tRNA(Gln) + L-glutamate + ADP + phosphate + H(+). Functionally, allows the formation of correctly charged Gln-tRNA(Gln) through the transamidation of misacylated Glu-tRNA(Gln) in organisms which lack glutaminyl-tRNA synthetase. The reaction takes place in the presence of glutamine and ATP through an activated gamma-phospho-Glu-tRNA(Gln). This Wolbachia sp. subsp. Brugia malayi (strain TRS) protein is Glutamyl-tRNA(Gln) amidotransferase subunit A.